The following is a 402-amino-acid chain: Formate-dependent phosphoribosylglycinamide formyltransferase (402 aa).

Residues 25–26 (EL) and E85 each bind N(1)-(5-phospho-beta-D-ribosyl)glycinamide. Residues R118, K159, 164–169 (SSGKGQ), 199–202 (EQFV), and E207 contribute to the ATP site. Residues 123–318 (RLASEELGLP…EFELHAKAVL (196 aa)) form the ATP-grasp domain. Positions 277 and 289 each coordinate Mg(2+). N(1)-(5-phospho-beta-D-ribosyl)glycinamide contacts are provided by residues D296, K365, and 372–373 (RR).

Belongs to the PurK/PurT family. As to quaternary structure, homodimer.

The enzyme catalyses N(1)-(5-phospho-beta-D-ribosyl)glycinamide + formate + ATP = N(2)-formyl-N(1)-(5-phospho-beta-D-ribosyl)glycinamide + ADP + phosphate + H(+). It participates in purine metabolism; IMP biosynthesis via de novo pathway; N(2)-formyl-N(1)-(5-phospho-D-ribosyl)glycinamide from N(1)-(5-phospho-D-ribosyl)glycinamide (formate route): step 1/1. Functionally, involved in the de novo purine biosynthesis. Catalyzes the transfer of formate to 5-phospho-ribosyl-glycinamide (GAR), producing 5-phospho-ribosyl-N-formylglycinamide (FGAR). Formate is provided by PurU via hydrolysis of 10-formyl-tetrahydrofolate. This is Formate-dependent phosphoribosylglycinamide formyltransferase from Corynebacterium efficiens (strain DSM 44549 / YS-314 / AJ 12310 / JCM 11189 / NBRC 100395).